The following is a 164-amino-acid chain: Transcription factor E (164 aa).

One can recognise an HTH TFE/IIEalpha-type domain in the interval 5–87; it reads NDKVIRGYLL…LWRLDFSDIE (83 aa).

This sequence belongs to the TFE family. As to quaternary structure, monomer. Interaction with RNA polymerase subunits RpoF and RpoE is necessary for Tfe stimulatory transcription activity. Able to interact with Tbp and RNA polymerase in the absence of DNA promoter. Interacts both with the preinitiation and elongation complexes.

Functionally, transcription factor that plays a role in the activation of archaeal genes transcribed by RNA polymerase. Facilitates transcription initiation by enhancing TATA-box recognition by TATA-box-binding protein (Tbp), and transcription factor B (Tfb) and RNA polymerase recruitment. Not absolutely required for transcription in vitro, but particularly important in cases where Tbp or Tfb function is not optimal. It dynamically alters the nucleic acid-binding properties of RNA polymerases by stabilizing the initiation complex and destabilizing elongation complexes. Seems to translocate with the RNA polymerase following initiation and acts by binding to the non template strand of the transcription bubble in elongation complexes. This is Transcription factor E from Methanosarcina barkeri (strain Fusaro / DSM 804).